Here is a 553-residue protein sequence, read N- to C-terminus: Methyl-coenzyme M reductase subunit alpha (553 aa).

Residue Q151 coordinates coenzyme F430. Coenzyme B is bound by residues R229, 260–261, and R274; that span reads KH. Y336 and Y447 together coordinate coenzyme M.

The protein belongs to the methyl-coenzyme M reductase alpha subunit family. In terms of assembly, MCR is a hexamer of two alpha, two beta, and two gamma chains, forming a dimer of heterotrimers. Coenzyme F430 is required as a cofactor.

Its subcellular location is the cytoplasm. The enzyme catalyses coenzyme B + methyl-coenzyme M = methane + coenzyme M-coenzyme B heterodisulfide. It functions in the pathway one-carbon metabolism; methyl-coenzyme M reduction; methane from methyl-coenzyme M: step 1/1. In terms of biological role, component of the methyl-coenzyme M reductase (MCR) I that catalyzes the reductive cleavage of methyl-coenzyme M (CoM-S-CH3 or 2-(methylthio)ethanesulfonate) using coenzyme B (CoB or 7-mercaptoheptanoylthreonine phosphate) as reductant which results in the production of methane and the mixed heterodisulfide of CoB and CoM (CoM-S-S-CoB). This is the final step in methanogenesis. This is Methyl-coenzyme M reductase subunit alpha (mcrA) from Methanococcus vannielii.